The following is a 367-amino-acid chain: 2-aminoethylphosphonate--pyruvate transaminase (367 aa).

K194 is modified (N6-(pyridoxal phosphate)lysine).

Belongs to the class-V pyridoxal-phosphate-dependent aminotransferase family. PhnW subfamily. As to quaternary structure, homodimer. Pyridoxal 5'-phosphate is required as a cofactor.

It carries out the reaction (2-aminoethyl)phosphonate + pyruvate = phosphonoacetaldehyde + L-alanine. Involved in phosphonate degradation. The polypeptide is 2-aminoethylphosphonate--pyruvate transaminase (Salmonella paratyphi B (strain ATCC BAA-1250 / SPB7)).